The primary structure comprises 370 residues: 3,7-dimethylxanthine N-methyltransferase CkTbS (370 aa).

Tyrosine 24 is a binding site for S-adenosyl-L-homocysteine. A theobromine-binding site is contributed by threonine 31. The S-adenosyl-L-homocysteine site is built by cysteine 67, asparagine 72, aspartate 104, leucine 105, serine 139, and phenylalanine 140. Residues tyrosine 157, histidine 160, and tryptophan 161 each coordinate theobromine. Asparagine 178 lines the Mg(2+) pocket. Position 226 (histidine 226) interacts with theobromine. Mg(2+) is bound by residues aspartate 264, phenylalanine 266, and asparagine 267. Phenylalanine 322 lines the theobromine pocket.

Belongs to the methyltransferase superfamily. Type-7 methyltransferase family. Mg(2+) is required as a cofactor.

The catalysed reaction is 7-methylxanthine + S-adenosyl-L-methionine = theobromine + S-adenosyl-L-homocysteine + H(+). Its pathway is alkaloid biosynthesis. Functionally, involved in the biosynthesis of caffeine in cv. Puer. Involved in the biosynthesis of theacrine in cv. Kucha, a caffeine-like xanthine alkaloid with diverse beneficial biological activities including anti-depressive, sedative, and hypnotic activities, improving learning and memory, increasing exercise activity, and preventing nonalcoholic fatty liver disease. Catalyzes the conversion of 7-methylxanthine (7mX) to theobromine but not able to convert paraxanthine to caffeine. In Camellia sinensis var. assamica (Assam tea), this protein is 3,7-dimethylxanthine N-methyltransferase CkTbS.